A 359-amino-acid chain; its full sequence is uncharacterized protein (359 aa).

In terms of domain architecture, Protein kinase spans 43-309 (YHLIRKLGSG…VLDFLGDDWG (267 aa)). Residues 49 to 57 (LGSGSYGRV) and K72 contribute to the ATP site. The active-site Proton acceptor is the D163. The disordered stretch occupies residues 314-359 (REGPGVLGSAVSYEDREEGGSSLEEWTDEGDDSKSGGRTGTDGGAP). Gly residues predominate over residues 350–359 (GRTGTDGGAP).

The protein belongs to the protein kinase superfamily. Ser/Thr protein kinase family. STKL subfamily.

It catalyses the reaction L-seryl-[protein] + ATP = O-phospho-L-seryl-[protein] + ADP + H(+). The enzyme catalyses L-threonyl-[protein] + ATP = O-phospho-L-threonyl-[protein] + ADP + H(+). This is an uncharacterized protein from Homo sapiens (Human).